The sequence spans 298 residues: dTDP-4-dehydrorhamnose reductase (298 aa).

Residues 10–12, 35–36, and 59–61 each bind NADH; these read GQV, DL, and AYT. Residues 11–12, 35–36, 59–61, and tyrosine 98 each bind NADPH; these read QV, DL, and AYT. 100 to 101 serves as a coordination point for dTDP-beta-L-rhamnose; it reads TD. 2 residues coordinate NADH: tyrosine 124 and lysine 128. Residues tyrosine 124 and lysine 128 each contribute to the NADPH site. Catalysis depends on tyrosine 124, which acts as the Proton donor/acceptor. A dTDP-beta-L-rhamnose-binding site is contributed by tryptophan 149.

The protein belongs to the dTDP-4-dehydrorhamnose reductase family. As to quaternary structure, homodimer. Mg(2+) serves as cofactor.

It catalyses the reaction dTDP-beta-L-rhamnose + NADP(+) = dTDP-4-dehydro-beta-L-rhamnose + NADPH + H(+). It participates in carbohydrate biosynthesis; dTDP-L-rhamnose biosynthesis. It functions in the pathway bacterial outer membrane biogenesis; LPS O-antigen biosynthesis. In terms of biological role, involved in the biosynthesis of the dTDP-L-rhamnose which is an important component of lipopolysaccharide (LPS). Catalyzes the reduction of dTDP-6-deoxy-L-lyxo-4-hexulose to yield dTDP-L-rhamnose. This Burkholderia thailandensis (strain ATCC 700388 / DSM 13276 / CCUG 48851 / CIP 106301 / E264) protein is dTDP-4-dehydrorhamnose reductase.